The chain runs to 293 residues: 4-diphosphocytidyl-2-C-methyl-D-erythritol kinase (293 aa).

The active site involves lysine 16. 99 to 109 is an ATP binding site; it reads PMGAGLGGGSS. The active site involves aspartate 141.

This sequence belongs to the GHMP kinase family. IspE subfamily.

It carries out the reaction 4-CDP-2-C-methyl-D-erythritol + ATP = 4-CDP-2-C-methyl-D-erythritol 2-phosphate + ADP + H(+). The protein operates within isoprenoid biosynthesis; isopentenyl diphosphate biosynthesis via DXP pathway; isopentenyl diphosphate from 1-deoxy-D-xylulose 5-phosphate: step 3/6. Catalyzes the phosphorylation of the position 2 hydroxy group of 4-diphosphocytidyl-2C-methyl-D-erythritol. The protein is 4-diphosphocytidyl-2-C-methyl-D-erythritol kinase of Burkholderia cenocepacia (strain ATCC BAA-245 / DSM 16553 / LMG 16656 / NCTC 13227 / J2315 / CF5610) (Burkholderia cepacia (strain J2315)).